Here is a 416-residue protein sequence, read N- to C-terminus: Multifunctional CCA protein (416 aa).

ATP contacts are provided by Gly-8 and Arg-11. CTP-binding residues include Gly-8 and Arg-11. Mg(2+) is bound by residues Asp-21 and Asp-23. The ATP site is built by Arg-91, Arg-137, and Arg-140. CTP-binding residues include Arg-91, Arg-137, and Arg-140. Residues 228–329 (TGLHTMLVLA…IKLFDKADFW (102 aa)) form the HD domain.

Belongs to the tRNA nucleotidyltransferase/poly(A) polymerase family. Bacterial CCA-adding enzyme type 1 subfamily. In terms of assembly, monomer. Can also form homodimers and oligomers. Requires Mg(2+) as cofactor. Ni(2+) is required as a cofactor.

The catalysed reaction is a tRNA precursor + 2 CTP + ATP = a tRNA with a 3' CCA end + 3 diphosphate. It carries out the reaction a tRNA with a 3' CCA end + 2 CTP + ATP = a tRNA with a 3' CCACCA end + 3 diphosphate. Functionally, catalyzes the addition and repair of the essential 3'-terminal CCA sequence in tRNAs without using a nucleic acid template. Adds these three nucleotides in the order of C, C, and A to the tRNA nucleotide-73, using CTP and ATP as substrates and producing inorganic pyrophosphate. tRNA 3'-terminal CCA addition is required both for tRNA processing and repair. Also involved in tRNA surveillance by mediating tandem CCA addition to generate a CCACCA at the 3' terminus of unstable tRNAs. While stable tRNAs receive only 3'-terminal CCA, unstable tRNAs are marked with CCACCA and rapidly degraded. The protein is Multifunctional CCA protein of Shewanella sp. (strain ANA-3).